The following is a 121-amino-acid chain: Basic phospholipase A2 homolog GodMT-II (121 aa).

7 disulfide bridges follow: cysteine 26–cysteine 115, cysteine 28–cysteine 44, cysteine 43–cysteine 95, cysteine 49–cysteine 121, cysteine 50–cysteine 88, cysteine 57–cysteine 81, and cysteine 75–cysteine 86. An important for membrane-damaging activities in eukaryotes and bacteria; heparin-binding region spans residues 105–117; sequence KNYKIYPKPLCKK.

It belongs to the phospholipase A2 family. Group II subfamily. K49 sub-subfamily. In terms of assembly, monomer. Expressed by the venom gland.

The protein localises to the secreted. In terms of biological role, snake venom phospholipase A2 homolog that lacks enzymatic activity but shows high myotoxic activities. In vivo, induces a mild edema when subcutaneously injected into mice foot pad. The sequence is that of Basic phospholipase A2 homolog GodMT-II from Cerrophidion godmani (Porthidium godmani).